Reading from the N-terminus, the 223-residue chain is 7-cyano-7-deazaguanine synthase (223 aa).

8–18 provides a ligand contact to ATP; sequence MSGGMDSTLCA. 4 residues coordinate Zn(2+): Cys187, Cys195, Cys198, and Cys201.

Belongs to the QueC family. Zn(2+) serves as cofactor.

It catalyses the reaction 7-carboxy-7-deazaguanine + NH4(+) + ATP = 7-cyano-7-deazaguanine + ADP + phosphate + H2O + H(+). It functions in the pathway purine metabolism; 7-cyano-7-deazaguanine biosynthesis. Catalyzes the ATP-dependent conversion of 7-carboxy-7-deazaguanine (CDG) to 7-cyano-7-deazaguanine (preQ(0)). This Campylobacter curvus (strain 525.92) protein is 7-cyano-7-deazaguanine synthase.